The sequence spans 413 residues: Amino acid transporter AVT3B (413 aa).

Residues 1 to 27 (MGLEEQGRAREDTPLLGKGRPLSSKFK) lie on the Cytoplasmic side of the membrane. Residues 28–48 (TFANVFIAIVGAGVLGLPYAF) traverse the membrane as a helical segment. At 49 to 54 (KRTGWL) the chain is on the vacuolar side. Residues 55–75 (MGLLTLFSVAALINHCMMLLV) traverse the membrane as a helical segment. Residues 76-103 (HIRRKLGVSNIGSFGDLGFAACGNLGRF) are Cytoplasmic-facing. A helical transmembrane segment spans residues 104–124 (VVDILIILSQAGFCVGYLIFI). Residues 125 to 145 (GNTLANLSKPTKSTTLMSLRH) lie on the Vacuolar side of the membrane. A helical transmembrane segment spans residues 146 to 166 (LMGVSPKSLYIWGCFPFQLGL). Residues 167–174 (NSIKTLTH) are Cytoplasmic-facing. Residues 175–195 (LAPLSIFADVVDLGAMAVVIV) traverse the membrane as a helical segment. Residues 196 to 207 (EDIKITVVQRPQ) lie on the Vacuolar side of the membrane. Residues 208–228 (VVAFGGMSVFFYGMGVAVYAF) traverse the membrane as a helical segment. Residues 229 to 249 (EGVGMVLPLESETKDKDKFGK) lie on the Cytoplasmic side of the membrane. The helical transmembrane segment at 250 to 270 (VLALSMLFIAVMYGSFGVLGY) threads the bilayer. Residues 271-288 (MAFGDDTMDIITANLGAG) are Vacuolar-facing. Residues 289-309 (VVSSLVQLGLCINLFFTFPLM) form a helical membrane-spanning segment. Over 310–331 (MNPVFEIVERRFWSGMYCVWLR) the chain is Cytoplasmic. Residues 332–352 (WLLVLAVTLVALLVPNFADFL) form a helical membrane-spanning segment. The Vacuolar portion of the chain corresponds to 353–355 (SLV). The chain crosses the membrane as a helical span at residues 356–376 (GSSVCCALGFVLPSLFHLMVF). Topologically, residues 377 to 390 (KDEMEWKQRALDVG) are cytoplasmic. Residues 391–411 (ILLLGVILGVSGTWSSLTEIF) form a helical membrane-spanning segment. The Vacuolar portion of the chain corresponds to 412–413 (QE).

Belongs to the amino acid/polyamine transporter 2 family. Amino acid/auxin permease (AAAP) (TC 2.A.18.8) subfamily. Ubiquitous.

The protein resides in the vacuole membrane. Translocates preferentially neutral amino acids from the vacuole to the cytoplasm. This is Amino acid transporter AVT3B from Arabidopsis thaliana (Mouse-ear cress).